Here is a 124-residue protein sequence, read N- to C-terminus: Small ribosomal subunit protein uS12 (124 aa).

Residues 1–25 are disordered; sequence MPTINQLIRKPRKSQKEKTASPALQ. Position 89 is a 3-methylthioaspartic acid (D89).

This sequence belongs to the universal ribosomal protein uS12 family. In terms of assembly, part of the 30S ribosomal subunit. Contacts proteins S8 and S17. May interact with IF1 in the 30S initiation complex.

With S4 and S5 plays an important role in translational accuracy. In terms of biological role, interacts with and stabilizes bases of the 16S rRNA that are involved in tRNA selection in the A site and with the mRNA backbone. Located at the interface of the 30S and 50S subunits, it traverses the body of the 30S subunit contacting proteins on the other side and probably holding the rRNA structure together. The combined cluster of proteins S8, S12 and S17 appears to hold together the shoulder and platform of the 30S subunit. The sequence is that of Small ribosomal subunit protein uS12 from Borrelia turicatae (strain 91E135).